We begin with the raw amino-acid sequence, 223 residues long: Phosphoribosylformylglycinamidine synthase subunit PurQ (223 aa).

The Glutamine amidotransferase type-1 domain maps to 3–223 (FAVLVFPGSN…MVKSWREQHV (221 aa)). Catalysis depends on cysteine 85, which acts as the Nucleophile. Residues histidine 193 and glutamate 195 contribute to the active site.

As to quaternary structure, part of the FGAM synthase complex composed of 1 PurL, 1 PurQ and 2 PurS subunits.

The protein localises to the cytoplasm. The enzyme catalyses N(2)-formyl-N(1)-(5-phospho-beta-D-ribosyl)glycinamide + L-glutamine + ATP + H2O = 2-formamido-N(1)-(5-O-phospho-beta-D-ribosyl)acetamidine + L-glutamate + ADP + phosphate + H(+). It catalyses the reaction L-glutamine + H2O = L-glutamate + NH4(+). Its pathway is purine metabolism; IMP biosynthesis via de novo pathway; 5-amino-1-(5-phospho-D-ribosyl)imidazole from N(2)-formyl-N(1)-(5-phospho-D-ribosyl)glycinamide: step 1/2. Its function is as follows. Part of the phosphoribosylformylglycinamidine synthase complex involved in the purines biosynthetic pathway. Catalyzes the ATP-dependent conversion of formylglycinamide ribonucleotide (FGAR) and glutamine to yield formylglycinamidine ribonucleotide (FGAM) and glutamate. The FGAM synthase complex is composed of three subunits. PurQ produces an ammonia molecule by converting glutamine to glutamate. PurL transfers the ammonia molecule to FGAR to form FGAM in an ATP-dependent manner. PurS interacts with PurQ and PurL and is thought to assist in the transfer of the ammonia molecule from PurQ to PurL. The sequence is that of Phosphoribosylformylglycinamidine synthase subunit PurQ from Staphylococcus aureus (strain USA300).